Reading from the N-terminus, the 76-residue chain is MSKGIHFEQSITELEEIVRQLEKGELSLEESLKQFEKGISLARRCQNALNQAEQKIETLTGTDSNIELDSDEQTSD.

Belongs to the XseB family. In terms of assembly, heterooligomer composed of large and small subunits.

It is found in the cytoplasm. The enzyme catalyses Exonucleolytic cleavage in either 5'- to 3'- or 3'- to 5'-direction to yield nucleoside 5'-phosphates.. Its function is as follows. Bidirectionally degrades single-stranded DNA into large acid-insoluble oligonucleotides, which are then degraded further into small acid-soluble oligonucleotides. The sequence is that of Exodeoxyribonuclease 7 small subunit from Legionella pneumophila subsp. pneumophila (strain Philadelphia 1 / ATCC 33152 / DSM 7513).